We begin with the raw amino-acid sequence, 208 residues long: Kinetochore protein Spc25 (208 aa).

A coiled-coil region spans residues 31-101; sequence SKIAAKHQLI…KKQRRDELMG (71 aa).

This sequence belongs to the SPC25 family. Component of the Ndc80 complex, which is composed of Ndc80, Nuf2 and Spc25.

It is found in the nucleus. Its subcellular location is the chromosome. The protein localises to the centromere. The protein resides in the kinetochore. Acts as a component of the essential kinetochore-associated Ndc80 complex, which is required for chromosome segregation and spindle checkpoint activity during meiosis and mitosis. Required for kinetochore integrity and the organization of stable microtubule binding sites in the outer plate of the kinetochore. Participates in SAC signaling that responds specifically to disruptions in spindle microtubule dynamics. The NDC80 complex synergistically enhances the affinity of the SKA1 complex for microtubules and may allow the NDC80 complex to track depolymerizing microtubules. In Drosophila mojavensis (Fruit fly), this protein is Kinetochore protein Spc25.